Here is a 686-residue protein sequence, read N- to C-terminus: Rhophilin-2 (686 aa).

Positions 26 to 100 (NPLAQTGRSK…LEGLNISVGV (75 aa)) constitute an REM-1 domain. The interval 46–66 (QILKAVRMRTGAENLLKVATN) is interaction with Rho. The BRO1 domain maps to 111–460 (PLIPLGLKET…RLTYAQHQEE (350 aa)). A PDZ domain is found at 515–593 (RSIRFTAEEG…DEIEMKVVSL (79 aa)). The residue at position 655 (Thr655) is a Phosphothreonine.

Belongs to the RHPN family. Interacts with GTP-bound RhoA and RhoB. Interacts with both GTP- and GDP-bound RhoA. According to PubMed:12473120, it does not interact with RhoA. Interacts with KRT18. In terms of tissue distribution, widely expressed. Highly expressed in prostate, trachea, stomach, colon, thyroid and pancreas. Expressed at lower level in brain, spinal cord, kidney, placenta and liver.

It is found in the cytoplasm. It localises to the perinuclear region. Its function is as follows. Binds specifically to GTP-Rho. May function in a Rho pathway to limit stress fiber formation and/or increase the turnover of F-actin structures in the absence of high levels of RhoA activity. This is Rhophilin-2 (RHPN2) from Homo sapiens (Human).